Here is a 323-residue protein sequence, read N- to C-terminus: Phosphate acetyltransferase (323 aa).

Belongs to the phosphate acetyltransferase and butyryltransferase family.

The protein resides in the cytoplasm. The enzyme catalyses acetyl-CoA + phosphate = acetyl phosphate + CoA. It participates in metabolic intermediate biosynthesis; acetyl-CoA biosynthesis; acetyl-CoA from acetate: step 2/2. The protein is Phosphate acetyltransferase (pta) of Bacillus subtilis (strain 168).